Reading from the N-terminus, the 1299-residue chain is DNA-directed RNA polymerase subunit beta' (1299 aa).

Residues Cys-60, Cys-62, Cys-75, and Cys-78 each coordinate Zn(2+). The tract at residues 385–405 is disordered; it reads GRRGRPVTGPGNRPLKSLSDM. Mg(2+) is bound by residues Asp-535, Asp-537, and Asp-539. Residues Cys-886, Cys-962, Cys-969, and Cys-972 each coordinate Zn(2+).

The protein belongs to the RNA polymerase beta' chain family. The RNAP catalytic core consists of 2 alpha, 1 beta, 1 beta' and 1 omega subunit. When a sigma factor is associated with the core the holoenzyme is formed, which can initiate transcription. Mg(2+) is required as a cofactor. Zn(2+) serves as cofactor.

The catalysed reaction is RNA(n) + a ribonucleoside 5'-triphosphate = RNA(n+1) + diphosphate. Functionally, DNA-dependent RNA polymerase catalyzes the transcription of DNA into RNA using the four ribonucleoside triphosphates as substrates. This Streptomyces coelicolor (strain ATCC BAA-471 / A3(2) / M145) protein is DNA-directed RNA polymerase subunit beta'.